A 111-amino-acid polypeptide reads, in one-letter code: Nucleoid-associated protein CYB_2894 (111 aa).

This sequence belongs to the YbaB/EbfC family. As to quaternary structure, homodimer.

The protein resides in the cytoplasm. It localises to the nucleoid. Its function is as follows. Binds to DNA and alters its conformation. May be involved in regulation of gene expression, nucleoid organization and DNA protection. The protein is Nucleoid-associated protein CYB_2894 of Synechococcus sp. (strain JA-2-3B'a(2-13)) (Cyanobacteria bacterium Yellowstone B-Prime).